A 128-amino-acid chain; its full sequence is uncharacterized protein (128 aa).

The segment covering 1-11 (MDNKKKEENPS) has biased composition (basic and acidic residues). The tract at residues 1–40 (MDNKKKEENPSKSDTSISLPPSSTGEALQNYTESEWNASD) is disordered. Residues 12-37 (KSDTSISLPPSSTGEALQNYTESEWN) are compositionally biased toward polar residues.

This is an uncharacterized protein from Caenorhabditis elegans.